Here is a 128-residue protein sequence, read N- to C-terminus: UPF0212 protein TGAM_1344 (128 aa).

It belongs to the UPF0212 family.

This chain is UPF0212 protein TGAM_1344, found in Thermococcus gammatolerans (strain DSM 15229 / JCM 11827 / EJ3).